Here is a 161-residue protein sequence, read N- to C-terminus: Putative HTH-type transcriptional regulator MT1325 (161 aa).

The 131-residue stretch at 2-132 (RMSAKAEYAV…EETTLADVAG (131 aa)) folds into the HTH rrf2-type domain.

The protein is Putative HTH-type transcriptional regulator MT1325 of Mycobacterium tuberculosis (strain CDC 1551 / Oshkosh).